The chain runs to 339 residues: Ketol-acid reductoisomerase (NADP(+)) (339 aa).

Residues 1–182 (MRVYYDRDAD…GGGRAGIIET (182 aa)) enclose the KARI N-terminal Rossmann domain. Residues 24 to 27 (YGSQ), Arg-48, Ser-51, Ser-53, and 83 to 86 (DELQ) each bind NADP(+). The active site involves His-108. Residue Gly-134 participates in NADP(+) binding. Residues 183–328 (TFKEECETDL…ERLRGMMPWI (146 aa)) form the KARI C-terminal knotted domain. Mg(2+)-binding residues include Asp-191, Glu-195, Glu-227, and Glu-231. Residue Ser-252 participates in substrate binding.

The protein belongs to the ketol-acid reductoisomerase family. Mg(2+) serves as cofactor.

The enzyme catalyses (2R)-2,3-dihydroxy-3-methylbutanoate + NADP(+) = (2S)-2-acetolactate + NADPH + H(+). It catalyses the reaction (2R,3R)-2,3-dihydroxy-3-methylpentanoate + NADP(+) = (S)-2-ethyl-2-hydroxy-3-oxobutanoate + NADPH + H(+). It participates in amino-acid biosynthesis; L-isoleucine biosynthesis; L-isoleucine from 2-oxobutanoate: step 2/4. The protein operates within amino-acid biosynthesis; L-valine biosynthesis; L-valine from pyruvate: step 2/4. Its function is as follows. Involved in the biosynthesis of branched-chain amino acids (BCAA). Catalyzes an alkyl-migration followed by a ketol-acid reduction of (S)-2-acetolactate (S2AL) to yield (R)-2,3-dihydroxy-isovalerate. In the isomerase reaction, S2AL is rearranged via a Mg-dependent methyl migration to produce 3-hydroxy-3-methyl-2-ketobutyrate (HMKB). In the reductase reaction, this 2-ketoacid undergoes a metal-dependent reduction by NADPH to yield (R)-2,3-dihydroxy-isovalerate. The chain is Ketol-acid reductoisomerase (NADP(+)) from Methylobacterium sp. (strain 4-46).